Consider the following 427-residue polypeptide: UPF0415 protein C7orf25 homolog (427 aa).

Positions 200 to 234 (GGEEEDEEDQEGDHEDLVEEEEDGEDDNDDDSDDT) are enriched in acidic residues. The segment at 200 to 236 (GGEEEDEEDQEGDHEDLVEEEEDGEDDNDDDSDDTDL) is disordered.

The protein belongs to the UPF0415 family.

This chain is UPF0415 protein C7orf25 homolog, found in Danio rerio (Zebrafish).